A 706-amino-acid polypeptide reads, in one-letter code: Ribosomal RNA large subunit methyltransferase K/L (706 aa).

The THUMP domain occupies 43-154; that stretch reads LMYQSLLWSR…RDMASVALDL (112 aa).

This sequence belongs to the methyltransferase superfamily. RlmKL family.

The protein resides in the cytoplasm. It carries out the reaction guanosine(2445) in 23S rRNA + S-adenosyl-L-methionine = N(2)-methylguanosine(2445) in 23S rRNA + S-adenosyl-L-homocysteine + H(+). The catalysed reaction is guanosine(2069) in 23S rRNA + S-adenosyl-L-methionine = N(2)-methylguanosine(2069) in 23S rRNA + S-adenosyl-L-homocysteine + H(+). In terms of biological role, specifically methylates the guanine in position 2445 (m2G2445) and the guanine in position 2069 (m7G2069) of 23S rRNA. In Yersinia pseudotuberculosis serotype O:1b (strain IP 31758), this protein is Ribosomal RNA large subunit methyltransferase K/L.